A 109-amino-acid chain; its full sequence is Large ribosomal subunit protein eL30A (109 aa).

The protein belongs to the eukaryotic ribosomal protein eL30 family. In terms of assembly, component of the large ribosomal subunit (LSU). Mature yeast ribosomes consist of a small (40S) and a large (60S) subunit. The 40S small subunit contains 1 molecule of ribosomal RNA (18S rRNA) and at least 33 different proteins. The large 60S subunit contains 3 rRNA molecules (25S, 5.8S and 5S rRNA) and at least 46 different proteins.

It localises to the cytoplasm. In terms of biological role, component of the ribosome, a large ribonucleoprotein complex responsible for the synthesis of proteins in the cell. The small ribosomal subunit (SSU) binds messenger RNAs (mRNAs) and translates the encoded message by selecting cognate aminoacyl-transfer RNA (tRNA) molecules. The large subunit (LSU) contains the ribosomal catalytic site termed the peptidyl transferase center (PTC), which catalyzes the formation of peptide bonds, thereby polymerizing the amino acids delivered by tRNAs into a polypeptide chain. The nascent polypeptides leave the ribosome through a tunnel in the LSU and interact with protein factors that function in enzymatic processing, targeting, and the membrane insertion of nascent chains at the exit of the ribosomal tunnel. The protein is Large ribosomal subunit protein eL30A (rpl3001) of Schizosaccharomyces pombe (strain 972 / ATCC 24843) (Fission yeast).